Reading from the N-terminus, the 146-residue chain is Hemoglobin subunit beta-1 (146 aa).

Residues 2-146 (HWTEKERTII…VVSALGKQYH (145 aa)) form the Globin domain. Positions 63 and 92 each coordinate heme b.

It belongs to the globin family. Hb1 is a heterotetramer of two alpha chains and two beta-1 chains. In terms of tissue distribution, red blood cells.

Involved in oxygen transport from gills to the various peripheral tissues. This is Hemoglobin subunit beta-1 from Dissostichus eleginoides (Patagonian toothfish).